The sequence spans 222 residues: UPF0758 protein HSM_0009 (222 aa).

Residues 99–222 (QEFTSPDTVR…YFSFAEQGWI (124 aa)) enclose the MPN domain. Zn(2+) contacts are provided by H171, H173, and D184. Positions 171 to 184 (HNHPSGVSTPSMAD) match the JAMM motif motif.

Belongs to the UPF0758 family.

In Histophilus somni (strain 2336) (Haemophilus somnus), this protein is UPF0758 protein HSM_0009.